A 312-amino-acid polypeptide reads, in one-letter code: DNA-directed RNA polymerase subunit alpha (312 aa).

Residues 1–229 (MLQYQIDRID…ELFQPLATVT (229 aa)) form an alpha N-terminal domain (alpha-NTD) region. The alpha C-terminal domain (alpha-CTD) stretch occupies residues 240-312 (PSPEAQIPLE…ISIPQSRTSV (73 aa)).

Belongs to the RNA polymerase alpha chain family. In terms of assembly, in cyanobacteria the RNAP catalytic core is composed of 2 alpha, 1 beta, 1 beta', 1 gamma and 1 omega subunit. When a sigma factor is associated with the core the holoenzyme is formed, which can initiate transcription.

The enzyme catalyses RNA(n) + a ribonucleoside 5'-triphosphate = RNA(n+1) + diphosphate. Its function is as follows. DNA-dependent RNA polymerase catalyzes the transcription of DNA into RNA using the four ribonucleoside triphosphates as substrates. In Prochlorococcus marinus (strain AS9601), this protein is DNA-directed RNA polymerase subunit alpha.